The chain runs to 519 residues: Glucose-1-phosphate adenylyltransferase large subunit 2, chloroplastic/amyloplastic (519 aa).

Belongs to the bacterial/plant glucose-1-phosphate adenylyltransferase family. As to quaternary structure, heterotetramer. In terms of tissue distribution, leaves and tubers.

It localises to the plastid. The protein localises to the chloroplast. The protein resides in the amyloplast. It carries out the reaction alpha-D-glucose 1-phosphate + ATP + H(+) = ADP-alpha-D-glucose + diphosphate. It functions in the pathway glycan biosynthesis; starch biosynthesis. Its activity is regulated as follows. Activated by 3'phosphoglycerate, inhibited by orthophosphate. Allosteric regulation. In terms of biological role, this protein plays a role in synthesis of starch. It catalyzes the synthesis of the activated glycosyl donor, ADP-glucose from Glc-1-P and ATP. This chain is Glucose-1-phosphate adenylyltransferase large subunit 2, chloroplastic/amyloplastic (AGPS2), found in Solanum tuberosum (Potato).